Reading from the N-terminus, the 106-residue chain is Large ribosomal subunit protein bL21 (106 aa).

The protein belongs to the bacterial ribosomal protein bL21 family. In terms of assembly, part of the 50S ribosomal subunit. Contacts protein L20.

In terms of biological role, this protein binds to 23S rRNA in the presence of protein L20. The protein is Large ribosomal subunit protein bL21 of Thermosipho africanus (strain TCF52B).